The following is a 141-amino-acid chain: Hemoglobin subunit alpha-2 (141 aa).

In terms of domain architecture, Globin spans 1–141 (VLSSQDKANV…VKHVLTSKYR (141 aa)). An O2-binding site is contributed by His-58. His-87 lines the heme b pocket.

This sequence belongs to the globin family. As to quaternary structure, minor hemoglobin is a heterotetramer of two alpha-2 chains and two beta-2 chains. As to expression, red blood cells.

Functionally, involved in oxygen transport from the lung to the various peripheral tissues. The polypeptide is Hemoglobin subunit alpha-2 (Triturus cristatus (Great crested newt)).